Here is a 378-residue protein sequence, read N- to C-terminus: Chaperone protein DnaJ (378 aa).

The J domain occupies 6–70; it reads DYYDVLGVSR…QKRQQYDQFG (65 aa). Residues 137–219 form a CR-type zinc finger; the sequence is GKTSEISYSR…CHGKGVKTQK (83 aa). The Zn(2+) site is built by Cys150, Cys153, Cys167, Cys170, Cys193, Cys196, Cys207, and Cys210. CXXCXGXG motif repeat units follow at residues 150–157, 167–174, 193–200, and 207–214; these read CEVCKGSG, CDKCGGSG, CDKCAGSG, and CHNCHGKG.

The protein belongs to the DnaJ family. As to quaternary structure, homodimer. It depends on Zn(2+) as a cofactor.

It localises to the cytoplasm. In terms of biological role, participates actively in the response to hyperosmotic and heat shock by preventing the aggregation of stress-denatured proteins and by disaggregating proteins, also in an autonomous, DnaK-independent fashion. Unfolded proteins bind initially to DnaJ; upon interaction with the DnaJ-bound protein, DnaK hydrolyzes its bound ATP, resulting in the formation of a stable complex. GrpE releases ADP from DnaK; ATP binding to DnaK triggers the release of the substrate protein, thus completing the reaction cycle. Several rounds of ATP-dependent interactions between DnaJ, DnaK and GrpE are required for fully efficient folding. Also involved, together with DnaK and GrpE, in the DNA replication of plasmids through activation of initiation proteins. This is Chaperone protein DnaJ from Lactobacillus delbrueckii subsp. bulgaricus (strain ATCC BAA-365 / Lb-18).